The following is a 566-amino-acid chain: Class II hydrophobin FOXG_02748 (566 aa).

The signal sequence occupies residues 1-22 (MKSKSIMAASTVMELALAQASA). 4 disulfides stabilise this stretch: cysteine 497-cysteine 546, cysteine 507-cysteine 537, cysteine 508-cysteine 520, and cysteine 547-cysteine 558.

The protein belongs to the cerato-ulmin hydrophobin family. As to quaternary structure, homodimer. Homodimers further self-assemble to form highly ordered films at water-air interfaces through intermolecular interactions.

The protein localises to the secreted. Its subcellular location is the cell wall. Functionally, aerial growth, conidiation, and dispersal of filamentous fungi in the environment rely upon a capability of their secreting small amphipathic proteins called hydrophobins (HPBs) with low sequence identity. Class I can self-assemble into an outermost layer of rodlet bundles on aerial cell surfaces, conferring cellular hydrophobicity that supports fungal growth, development and dispersal; whereas Class II form highly ordered films at water-air interfaces through intermolecular interactions but contribute nothing to the rodlet structure. FOXG_02748 is a class II hydrophobin that is likely required for plant colonization. The sequence is that of Class II hydrophobin FOXG_02748 from Fusarium oxysporum f. sp. lycopersici (strain 4287 / CBS 123668 / FGSC 9935 / NRRL 34936) (Fusarium vascular wilt of tomato).